Here is a 408-residue protein sequence, read N- to C-terminus: MSTAADSPLSLAHYYLPVYRPRQVVLERGQGSRVWDDAGREYLDLSSGIAVSGLGHNDPDLVAALTEQAGKLWHTSNVFFSAPPLKLAEELVSASRFAHKVFLCNSGTEANEAAIKLVRKWASSQGRPADKRVIVTFRGSFHGRTLASVTATAQPKYQEGYEPLPGGFRYVDFNDVAALEAAMAGGDVAAVMVEPIQGEGGVMPAAPGFLSRVRALCDQHDALLVLDEIQCGMGRTGTLFAHWQEQVTPDIVTLAKALGGGFPIGAMLAGPKVAQTMQFGAHGTTFGGNPLAAAVARVALRKLASPQIADNVVRQSAALRAGLEALNAEFGLFAQIRGRGLMLGAVLAPEHAGQAGAILDLAAKHGLLLLQAGPDVLRFVPALNLTDAELADGLARLRLATAEYVAQP.

Pyridoxal 5'-phosphate contacts are provided by residues 107 to 108 (GT) and phenylalanine 141. N(2)-acetyl-L-ornithine is bound at residue arginine 144. 227–230 (DEIQ) provides a ligand contact to pyridoxal 5'-phosphate. Residue lysine 256 is modified to N6-(pyridoxal phosphate)lysine. Threonine 284 is a N(2)-acetyl-L-ornithine binding site. Threonine 285 is a pyridoxal 5'-phosphate binding site.

Belongs to the class-III pyridoxal-phosphate-dependent aminotransferase family. ArgD subfamily. Homodimer. Pyridoxal 5'-phosphate serves as cofactor.

Its subcellular location is the cytoplasm. It carries out the reaction N(2)-acetyl-L-ornithine + 2-oxoglutarate = N-acetyl-L-glutamate 5-semialdehyde + L-glutamate. The protein operates within amino-acid biosynthesis; L-arginine biosynthesis; N(2)-acetyl-L-ornithine from L-glutamate: step 4/4. The protein is Acetylornithine aminotransferase of Xanthomonas axonopodis pv. citri (strain 306).